A 352-amino-acid chain; its full sequence is Ferrochelatase (352 aa).

The Fe cation site is built by histidine 222 and glutamate 303.

The protein belongs to the ferrochelatase family.

It localises to the cytoplasm. It carries out the reaction heme b + 2 H(+) = protoporphyrin IX + Fe(2+). The protein operates within porphyrin-containing compound metabolism; protoheme biosynthesis; protoheme from protoporphyrin-IX: step 1/1. In terms of biological role, catalyzes the ferrous insertion into protoporphyrin IX. The chain is Ferrochelatase from Brucella abortus (strain S19).